Consider the following 773-residue polypeptide: Carnitine O-palmitoyltransferase 1, liver isoform (773 aa).

At A2 the chain carries N-acetylalanine. The Cytoplasmic portion of the chain corresponds to 2–47 (AEAHQAVAFQFTVTPDGIDLRLSHEALRQIYLSGLHSWKKKFIRFK). The helical transmembrane segment at 48-73 (NGIITGVYPASPSSWLIVVVGVMTTM) threads the bilayer. The Mitochondrial intermembrane segment spans residues 74–102 (YAKIDPSLGIIAKINRTLETANCMSSQTK). Residues 103-122 (NVVSGVLFGTGLWVALIVTM) form a helical membrane-spanning segment. The Cytoplasmic segment spans residues 123 to 773 (RYSLKVLLSY…LFGLSSNSKK (651 aa)). Y282 is subject to 3'-nitrotyrosine. H473 (proton acceptor) is an active-site residue. 555–567 (GKGIIKKCRTSPD) contacts CoA. Position 588 is a phosphothreonine (T588). Y589 carries the post-translational modification 3'-nitrotyrosine. The (R)-carnitine site is built by Y589 and T602. Phosphothreonine is present on T604. 2 positions are modified to phosphoserine: S741 and S747.

The protein belongs to the carnitine/choline acetyltransferase family. As to quaternary structure, homohexamer and homotrimer. Identified in a complex that contains at least CPT1A, ACSL1 and VDAC1. Also identified in complexes with ACSL1 and VDAC2 and VDAC3. Interacts with ZDHHC4. Strong expression in kidney and heart, and lower in liver and skeletal muscle.

The protein localises to the mitochondrion outer membrane. The catalysed reaction is (R)-carnitine + hexadecanoyl-CoA = O-hexadecanoyl-(R)-carnitine + CoA. It carries out the reaction succinyl-CoA + L-lysyl-[protein] = N(6)-succinyl-L-lysyl-[protein] + CoA + H(+). It participates in lipid metabolism; fatty acid beta-oxidation. Inhibited by malonyl-CoA. Its function is as follows. Catalyzes the transfer of the acyl group of long-chain fatty acid-CoA conjugates onto carnitine, an essential step for the mitochondrial uptake of long-chain fatty acids and their subsequent beta-oxidation in the mitochondrion. Also possesses a lysine succinyltransferase activity that can regulate enzymatic activity of substrate proteins such as ENO1 and metabolism independent of its classical carnitine O-palmitoyltransferase activity. Plays an important role in hepatic triglyceride metabolism. Also plays a role in inducible regulatory T-cell (iTreg) differentiation once activated by butyryl-CoA that antagonizes malonyl-CoA-mediated CPT1A repression. Sustains the IFN-I response by recruiting ZDHCC4 to palmitoylate MAVS at the mitochondria leading to MAVS stabilization and activation. Promotes ROS-induced oxidative stress in liver injury via modulation of NFE2L2 and NLRP3-mediated signaling pathways. In Homo sapiens (Human), this protein is Carnitine O-palmitoyltransferase 1, liver isoform.